A 494-amino-acid chain; its full sequence is Cytochrome P450 monooxygenase ccsD (494 aa).

Residues 5–25 form a helical membrane-spanning segment; the sequence is ISPRTLVLLAVTCSLLVLYFS. C438 contributes to the heme binding site. N-linked (GlcNAc...) asparagine glycosylation is found at N445 and N477.

The protein belongs to the cytochrome P450 family. Heme serves as cofactor.

It is found in the membrane. It participates in mycotoxin biosynthesis. Cytochrome P450 monooxygenase; part of the gene cluster that mediates the biosynthesis of a family of the mycotoxins cytochalasins E and K. The hybrid PKS-NRPS synthetase ccsA and the enoyl reductase ccsC are responsible for fusion of phenylalanine with an octaketide backbone and subsequent release of the stable tetramic acid precursor. The polyketide synthase module (PKS) of the PKS-NRPS ccsA is responsible for the synthesis of the octaketide backbone. The downstream nonribosomal peptide synthetase (NRPS) amidates the carboxyl end of the octaketide with a phenylalanine. A reductase-like domain (R) at the C-terminus catalyzes the reductive release of the polyketide-amino acid intermediate. Because ccsA lacks a designated enoylreductase (ER) domain, the required activity is provided the enoyl reductase ccsC. Upon formation of the 11-membered carbocycle-fused perhydroisoindolone intermediate, a number of oxidative steps are required to afford the final cytochalasin E and K, including two hydroxylations at C17 and C18, one alcohol oxidation at C17, one epoxidation at C6 and C7 and two Baeyer-Villiger oxidations. The oxidative modification at C17, C18 and the C6-C7 epoxidation are likely to be catalyzed by the two cytochrome P450 oxygenases ccsD and ccsG. CcsD may be responsible for the epoxidation of the C6-C7 double bond. CcsG may be responsible for the successive oxidative modifications at C17 and C18. The double Baeyer-Villiger oxidations of ketocytochalasin to precytochalasin and cytochalasin Z(16) are among the final steps leading to cytochalasin E and K and are catalyzed by ccsB. The first oxygen insertion step follows that of the classic BVMO mechanism, generating the ester precytochalasin. Release of precytochalasin into an aqueous environment can generate the shunt product iso-precytochalasin through spontaneous isomerization. Alternatively, precytochalasin can undergo further oxidation by ccsB to yield the in-line carbonate-containing cytochalasin Z(16). Cytochalasin Z(16) is a precursor to cytochalasin E and cytochalasin K, whereas iso-precytochalasin is a precursor to cytochalasin Z(17) and rosellichalasin. The hydrolyase ccsE may catalyze hydrolysis of epoxide bond in cytochalasin E to afford cytochalasin K. The function of ccsF has not been assigned but it may play a role in post-PKS-NRPS biosynthetic step, resistance or transport of cytochalasins and related PKS-NRPS products. The protein is Cytochrome P450 monooxygenase ccsD of Aspergillus clavatus (strain ATCC 1007 / CBS 513.65 / DSM 816 / NCTC 3887 / NRRL 1 / QM 1276 / 107).